The primary structure comprises 428 residues: Endoplasmic reticulum junction formation protein lunapark (428 aa).

Residue Gly-2 is the site of N-myristoyl glycine attachment. Over Gly-2–Arg-45 the chain is Cytoplasmic. Residues Glu-16–Leu-41 are a coiled coil. A helical transmembrane segment spans residues Leu-46–Leu-66. Residues Pro-67–Thr-77 are Lumenal-facing. The helical transmembrane segment at Leu-78–Phe-98 threads the bilayer. Residues Ser-99–Glu-428 are Cytoplasmic-facing. Residues Thr-102–Thr-128 adopt a coiled-coil conformation. Phosphoserine occurs at positions 114, 153, 177, 182, and 194. A disordered region spans residues Ser-143–Pro-247. The segment covering Gln-185–Pro-198 has biased composition (pro residues). Phosphothreonine is present on residues Thr-211 and Thr-213. 2 positions are modified to phosphoserine: Ser-217 and Ser-227. A C4-type; plays a role in ER morphology zinc finger spans residues Cys-276–Cys-301. 3 positions are modified to phosphoserine: Ser-321, Ser-353, and Ser-384. Residues His-356 to Glu-428 are disordered. Residues Ser-386–Ser-401 are compositionally biased toward acidic residues. Ser-414 carries the phosphoserine modification.

Belongs to the lunapark family. Homodimer; homodimerization requires the C4-type zinc finger motif and decreases during mitosis in a phosphorylation-dependent manner. Myristoylated; myristoylation is necessary for the endoplasmic reticulum (ER) three-way ER tubular junction formation, but is not required neither for membrane translocation, membrane topology formation, nor for the specific localization to ER membranes. In terms of processing, phosphorylated. Phosphorylation occurs at Ser-177, Ser-182, Ser-217, Ser-227, Ser-321 and Ser-384 during interphase. Phosphorylation occurs at Ser-114, Ser-153, Ser-194, Thr-211 and Ser-353 during mitosis; these phosphorylations reduce both its homodimerization and the ER three-way tubular junction formation. Post-translationally, subject to proteasomal degradation following phosphorylation during mitosis. Expressed in neural precursor cells, where it is detected at the growth-cone-like structure and branching sites of neurite-like processes.

It is found in the endoplasmic reticulum membrane. Endoplasmic reticulum (ER)-shaping membrane protein that plays a role in determining ER morphology. Involved in the stabilization of nascent three-way ER tubular junctions within the ER network. May also play a role as a curvature-stabilizing protein within the three-way ER tubular junction network. May be involved in limb development. Is involved in central nervous system development. This is Endoplasmic reticulum junction formation protein lunapark from Homo sapiens (Human).